The following is a 166-amino-acid chain: Myosin regulatory light chain 2, ventricular/cardiac muscle isoform (166 aa).

The residue at position 2 (Ser2) is a N,N,N-trimethylserine. Phosphoserine is present on residues Ser14, Ser15, and Ser19. EF-hand domains lie at 24 to 59 (TQIQEFKEAFTIMDQNRDGFIDKNDLRDTFAALGRV), 94 to 129 (DPEETILNAFKVFDPEGKGSLKADYVREMLTTQAER), and 130 to 165 (FSKEEIDQMFAAFPPDVTGNLDYKNLVHIITHGEEK). The Ca(2+) site is built by Asp37, Asn39, Asp41, and Asp48. Residue Thr52 is modified to Phosphothreonine.

Myosin is a hexamer of 2 heavy chains and 4 light chains. Interacts with MYOC. N-terminus is methylated by METTL11A/NTM1. Post-translationally, phosphorylated by MYLK3 and MYLK2; promotes cardiac muscle contraction and function. Dephosphorylated by PPP1CB complexed to PPP1R12B. The phosphorylated form in adult is expressed as gradients across the heart from endocardium (low phosphorylation) to epicardium (high phosphorylation); regulates cardiac torsion and workload distribution. In terms of tissue distribution, abundantly expressed in both cardiac and slow skeletal muscle (soleus), with no detectable expression in fast skeletal muscle (vastus lateralis) or non-muscle tissue.

It localises to the cytoplasm. The protein resides in the myofibril. It is found in the sarcomere. Its subcellular location is the a band. Functionally, contractile protein that plays a role in heart development and function. Following phosphorylation, plays a role in cross-bridge cycling kinetics and cardiac muscle contraction by increasing myosin lever arm stiffness and promoting myosin head diffusion; as a consequence of the increase in maximum contraction force and calcium sensitivity of contraction force. These events altogether slow down myosin kinetics and prolong duty cycle resulting in accumulated myosins being cooperatively recruited to actin binding sites to sustain thin filament activation as a means to fine-tune myofilament calcium sensitivity to force. During cardiogenesis plays an early role in cardiac contractility by promoting cardiac myofibril assembly. The protein is Myosin regulatory light chain 2, ventricular/cardiac muscle isoform of Rattus norvegicus (Rat).